The chain runs to 362 residues: Transcription factor Sox-7 (362 aa).

The interval 21–41 (EDLSDGLSPHRSPREKGSETR) is disordered. A compositionally biased stretch (basic and acidic residues) spans 32-41 (SPREKGSETR). Residues 42–110 (IRRPMNAFMV…QHMQDYPNYK (69 aa)) constitute a DNA-binding region (HMG box). The Sox C-terminal domain occupies 245 to 362 (QTGSSMIPPV…ATYYNSYSVS (118 aa)).

Expressed in the embryonic pronephric sinus as well as posterior cardinal veins.

The protein localises to the nucleus. Functionally, transcription factor. Binds to the DNA sequence 5'-AACAAT-3'. Acts downstream of vegt and upstream of nodal signaling to promote endodermal and mesodermal differentiation by promoting vegt-induced expression of both endodermal genes (including endodermin) and mesodermal genes (including snai1/snail and snai2/slug). Induces expression of multiple nodal genes (including nodal, nodal2, nodal4, nodal5 and nodal6) and binds directly to sites within the promoter of the nodal5 gene. The endodermal and mesodermal specification pathways then interact to initiate cardiogenesis. Acts partially redundantly with sox18 during cardiogenesis. Also acts as an antagonist of beta-catenin signaling. Regulates (possibly indirectly) development of the pronephros, the functional larval kidney. This chain is Transcription factor Sox-7, found in Xenopus tropicalis (Western clawed frog).